The sequence spans 605 residues: Elongation factor 4 (605 aa).

The tr-type G domain occupies 10–192; that stretch reads KNIRNFAIVA…AIVMRLPPPH (183 aa). Residues 22-27 and 139-142 each bind GTP; these read DHGKST and NKVD.

Belongs to the TRAFAC class translation factor GTPase superfamily. Classic translation factor GTPase family. LepA subfamily.

The protein localises to the cell inner membrane. The enzyme catalyses GTP + H2O = GDP + phosphate + H(+). Its function is as follows. Required for accurate and efficient protein synthesis under certain stress conditions. May act as a fidelity factor of the translation reaction, by catalyzing a one-codon backward translocation of tRNAs on improperly translocated ribosomes. Back-translocation proceeds from a post-translocation (POST) complex to a pre-translocation (PRE) complex, thus giving elongation factor G a second chance to translocate the tRNAs correctly. Binds to ribosomes in a GTP-dependent manner. In Chelativorans sp. (strain BNC1), this protein is Elongation factor 4.